A 388-amino-acid polypeptide reads, in one-letter code: WD repeat-containing protein 55 (388 aa).

The span at 1-20 (MDPTCEESPAEDSNNEEEDL) shows a compositional bias: acidic residues. The tract at residues 1–33 (MDPTCEESPAEDSNNEEEDLDSTKAAPRIRDTP) is disordered. WD repeat units follow at residues 37 to 76 (VLEA…GETK), 83 to 122 (HHLK…LERR), 126 to 164 (AHSA…PLMD), 167 to 206 (QHEE…FELL), 209 to 248 (PQSG…ATSD), 251 to 290 (ALRA…VVGT), and 293 to 333 (QHAG…TVVV). At Ser355 the chain carries Phosphoserine. A disordered region spans residues 364–388 (REDEEDAKAPEEVVRESDDDDDDSD). Residues 370 to 379 (AKAPEEVVRE) are compositionally biased toward basic and acidic residues.

This sequence belongs to the WD repeat WDR55 family.

It localises to the nucleus. The protein resides in the nucleolus. The protein localises to the cytoplasm. In terms of biological role, nucleolar protein that acts as a modulator of rRNA synthesis. Plays a central role during organogenesis. The chain is WD repeat-containing protein 55 (Wdr55) from Mus musculus (Mouse).